We begin with the raw amino-acid sequence, 614 residues long: UvrABC system protein C (614 aa).

Residues 12–89 (DKPGVYLFRG…IKEHRPRYNV (78 aa)) enclose the GIY-YIG domain. One can recognise a UVR domain in the interval 198 to 233 (ADLVRGLARKMEAAAANLEFERAAELRDQLRAVEQV).

This sequence belongs to the UvrC family. In terms of assembly, interacts with UvrB in an incision complex.

It is found in the cytoplasm. Functionally, the UvrABC repair system catalyzes the recognition and processing of DNA lesions. UvrC both incises the 5' and 3' sides of the lesion. The N-terminal half is responsible for the 3' incision and the C-terminal half is responsible for the 5' incision. This chain is UvrABC system protein C, found in Desulforudis audaxviator (strain MP104C).